We begin with the raw amino-acid sequence, 646 residues long: Zinc finger protein 503 (646 aa).

Residues 1–11 (MSTAPSLSALR) show a composition bias toward polar residues. The tract at residues 1–70 (MSTAPSLSAL…PPSDPLRQAN (70 aa)) is disordered. Gly residues predominate over residues 16-28 (SGGGGGGGGGGGA). The segment covering 34–52 (SALSGNSSGPGPGSSPAGS) has biased composition (low complexity). Position 102 is a phosphoserine (Ser-102). The disordered stretch occupies residues 121-332 (SQIGKPDPSP…PSAPTSSSVL (212 aa)). Residues 130–139 (PSSKLSSVAS) are compositionally biased toward low complexity. Composition is skewed to gly residues over residues 140–152 (NGGGAGGAGGGAA) and 189–205 (GGGGGGGGGGGGGGGGV). Residue Lys-209 is modified to N6-acetyllysine. Positions 217–226 (ATCQPFTPRT) are enriched in polar residues. Positions 227–240 (GSPSSSASACSPGG) are enriched in low complexity. Ser-231 and Ser-237 each carry phosphoserine. The span at 250–259 (EGKDDKKDTD) shows a compositional bias: basic and acidic residues. Gly residues-rich tracts occupy residues 260–277 (VGGGGKGTGGASAEGGPT) and 300–315 (GGPGGKALGSDCGGSS). A compositionally biased stretch (low complexity) spans 316–330 (GSSSGSGPSAPTSSS). The segment at 514–542 (HICNWVSANGPCDKRFATSEELLSHLRTH) adopts a C2H2-type zinc-finger fold. Residue Arg-636 is modified to Omega-N-methylarginine.

Belongs to the Elbow/Noc family.

The protein resides in the nucleus. May function as a transcriptional repressor. This Homo sapiens (Human) protein is Zinc finger protein 503 (ZNF503).